The primary structure comprises 202 residues: Secreted RxLR effector protein 11 (202 aa).

Positions 1-23 (MRLNFTKLFAGAVALAWTTESMA) are cleaved as a signal peptide. Residues 49–61 (RRLRTINGADEER) carry the RxLR-dEER motif.

It belongs to the RxLR effector family.

Its subcellular location is the secreted. The protein resides in the host cytoplasm. It localises to the host nucleus. Effector that acts as a broad suppressor of cell death to interrupt plant immunity. Inhibits cell death induced by cell death-inducing proteins, including the PAMP elicitor INF1 from P.infestans. The polypeptide is Secreted RxLR effector protein 11 (Plasmopara viticola (Downy mildew of grapevine)).